A 188-amino-acid chain; its full sequence is Segregation and condensation protein B (188 aa).

The protein belongs to the ScpB family. Homodimer. Homodimerization may be required to stabilize the binding of ScpA to the Smc head domains. Component of a cohesin-like complex composed of ScpA, ScpB and the Smc homodimer, in which ScpA and ScpB bind to the head domain of Smc. The presence of the three proteins is required for the association of the complex with DNA.

Its subcellular location is the cytoplasm. In terms of biological role, participates in chromosomal partition during cell division. May act via the formation of a condensin-like complex containing Smc and ScpA that pull DNA away from mid-cell into both cell halves. The chain is Segregation and condensation protein B from Streptococcus gordonii (strain Challis / ATCC 35105 / BCRC 15272 / CH1 / DL1 / V288).